The chain runs to 166 residues: Interferon gamma (166 aa).

The N-terminal stretch at 1-23 (MNYTSYILAFQLCVILGSSGCYC) is a signal peptide. Position 24 is a pyrrolidone carboxylic acid (Gln-24). N-linked (GlcNAc...) asparagine glycans are attached at residues Asn-39 and Asn-106.

Belongs to the type II (or gamma) interferon family. In terms of assembly, homodimer. Interacts with IFNGR1 (via extracellular domain); this interaction promotes IFNGR1 dimerization. As to expression, released primarily from activated T lymphocytes.

Its subcellular location is the secreted. In terms of biological role, type II interferon produced by immune cells such as T-cells and NK cells that plays crucial roles in antimicrobial, antiviral, and antitumor responses by activating effector immune cells and enhancing antigen presentation. Primarily signals through the JAK-STAT pathway after interaction with its receptor IFNGR1 to affect gene regulation. Upon IFNG binding, IFNGR1 intracellular domain opens out to allow association of downstream signaling components JAK2, JAK1 and STAT1, leading to STAT1 activation, nuclear translocation and transcription of IFNG-regulated genes. Many of the induced genes are transcription factors such as IRF1 that are able to further drive regulation of a next wave of transcription. Plays a role in class I antigen presentation pathway by inducing a replacement of catalytic proteasome subunits with immunoproteasome subunits. In turn, increases the quantity, quality, and repertoire of peptides for class I MHC loading. Increases the efficiency of peptide generation also by inducing the expression of activator PA28 that associates with the proteasome and alters its proteolytic cleavage preference. Up-regulates as well MHC II complexes on the cell surface by promoting expression of several key molecules such as cathepsins B/CTSB, H/CTSH, and L/CTSL. Participates in the regulation of hematopoietic stem cells during development and under homeostatic conditions by affecting their development, quiescence, and differentiation. This chain is Interferon gamma (IFNG), found in Camelus bactrianus (Bactrian camel).